The following is a 321-amino-acid chain: Probable E3 ubiquitin-protein ligase BAH1-like 1 (321 aa).

Residues Met1 to Ala149 form the SPX domain. The RING-type zinc-finger motif lies at Cys217–Arg266.

This sequence belongs to the RING-type zinc finger family.

The enzyme catalyses S-ubiquitinyl-[E2 ubiquitin-conjugating enzyme]-L-cysteine + [acceptor protein]-L-lysine = [E2 ubiquitin-conjugating enzyme]-L-cysteine + N(6)-ubiquitinyl-[acceptor protein]-L-lysine.. It functions in the pathway protein modification; protein ubiquitination. In Oryza sativa subsp. indica (Rice), this protein is Probable E3 ubiquitin-protein ligase BAH1-like 1.